Here is a 78-residue protein sequence, read N- to C-terminus: Small ribosomal subunit protein bS18A (78 aa).

Belongs to the bacterial ribosomal protein bS18 family. Part of the 30S ribosomal subunit. Forms a tight heterodimer with protein bS6.

In terms of biological role, binds as a heterodimer with protein bS6 to the central domain of the 16S rRNA, where it helps stabilize the platform of the 30S subunit. The polypeptide is Small ribosomal subunit protein bS18A (Streptomyces avermitilis (strain ATCC 31267 / DSM 46492 / JCM 5070 / NBRC 14893 / NCIMB 12804 / NRRL 8165 / MA-4680)).